We begin with the raw amino-acid sequence, 361 residues long: 3-dehydroquinate synthase (361 aa).

NAD(+)-binding positions include 73–78 (DAEAGK), 107–111 (GAATD), 131–132 (TT), Lys-144, Lys-153, and 171–174 (TLET). Positions 186, 249, and 265 each coordinate Zn(2+).

The protein belongs to the sugar phosphate cyclases superfamily. Dehydroquinate synthase family. The cofactor is NAD(+). Co(2+) serves as cofactor. Requires Zn(2+) as cofactor.

The protein localises to the cytoplasm. The catalysed reaction is 7-phospho-2-dehydro-3-deoxy-D-arabino-heptonate = 3-dehydroquinate + phosphate. It functions in the pathway metabolic intermediate biosynthesis; chorismate biosynthesis; chorismate from D-erythrose 4-phosphate and phosphoenolpyruvate: step 2/7. Functionally, catalyzes the conversion of 3-deoxy-D-arabino-heptulosonate 7-phosphate (DAHP) to dehydroquinate (DHQ). The sequence is that of 3-dehydroquinate synthase from Mycobacterium leprae (strain TN).